The primary structure comprises 224 residues: Lipoprotein-releasing system ATP-binding protein LolD (224 aa).

In terms of domain architecture, ABC transporter spans 6–224; the sequence is VRLRELRRSF…VVRLHEGVLE (219 aa). Residue 42–49 coordinates ATP; that stretch reads GPSGSGKS.

Belongs to the ABC transporter superfamily. Lipoprotein translocase (TC 3.A.1.125) family. As to quaternary structure, the complex is composed of two ATP-binding proteins (LolD) and two transmembrane proteins (LolC and LolE).

The protein resides in the cell inner membrane. Part of the ABC transporter complex LolCDE involved in the translocation of mature outer membrane-directed lipoproteins, from the inner membrane to the periplasmic chaperone, LolA. Responsible for the formation of the LolA-lipoprotein complex in an ATP-dependent manner. The sequence is that of Lipoprotein-releasing system ATP-binding protein LolD from Novosphingobium aromaticivorans (strain ATCC 700278 / DSM 12444 / CCUG 56034 / CIP 105152 / NBRC 16084 / F199).